Here is an 84-residue protein sequence, read N- to C-terminus: Small ribosomal subunit protein bS18A (84 aa).

It belongs to the bacterial ribosomal protein bS18 family. Part of the 30S ribosomal subunit. Forms a tight heterodimer with protein bS6.

Binds as a heterodimer with protein bS6 to the central domain of the 16S rRNA, where it helps stabilize the platform of the 30S subunit. In Mycobacterium marinum (strain ATCC BAA-535 / M), this protein is Small ribosomal subunit protein bS18A.